A 204-amino-acid chain; its full sequence is Putative AgrB-like protein (204 aa).

4 helical membrane-spanning segments follow: residues 52–74, 87–107, 111–131, and 156–176; these read YGIA…YLWL, LNCT…FQNI, NWIV…FAPA, and LILT…LIMV.

Belongs to the AgrB family.

The protein resides in the cell membrane. In terms of biological role, may be involved in the proteolytic processing of a quorum sensing system signal molecule precursor. This is Putative AgrB-like protein from Listeria monocytogenes serotype 4b (strain CLIP80459).